Here is a 330-residue protein sequence, read N- to C-terminus: Fructose-1,6-bisphosphatase class 1 (330 aa).

Mg(2+) is bound by residues Glu-78, Asp-97, Leu-99, and Asp-100. Substrate contacts are provided by residues 100 to 103 and Asn-188; that span reads DGSS. Mg(2+) is bound at residue Glu-260.

Belongs to the FBPase class 1 family. Homotetramer. The cofactor is Mg(2+).

The protein resides in the cytoplasm. It carries out the reaction beta-D-fructose 1,6-bisphosphate + H2O = beta-D-fructose 6-phosphate + phosphate. It participates in carbohydrate biosynthesis; gluconeogenesis. In Paracoccus denitrificans (strain Pd 1222), this protein is Fructose-1,6-bisphosphatase class 1.